The sequence spans 601 residues: Sulfite reductase [NADPH] flavoprotein alpha-component (601 aa).

The region spanning 64–202 (ITLISASQTG…AAAEWRARIV (139 aa)) is the Flavodoxin-like domain. Residues 70–75 (SQTGNA), 117–120 (STQG), and 153–162 (LGDTSYEFFC) each bind FMN. Residues 236-450 (EEPLVASLSV…IEHNDNFRLP (215 aa)) enclose the FAD-binding FR-type domain. Residues Thr-324, Ala-358, 388-391 (RLYS), 406-408 (TVG), and 421-424 (GGAS) each bind FAD. Residues 521-522 (SR), 527-531 (KIYVQ), and Asp-563 each bind NADP(+). Residue Tyr-601 coordinates FAD.

It belongs to the NADPH-dependent sulphite reductase flavoprotein subunit CysJ family. In the N-terminal section; belongs to the flavodoxin family. This sequence in the C-terminal section; belongs to the flavoprotein pyridine nucleotide cytochrome reductase family. In terms of assembly, alpha(8)-beta(8). The alpha component is a flavoprotein, the beta component is a hemoprotein. It depends on FAD as a cofactor. FMN serves as cofactor.

It catalyses the reaction hydrogen sulfide + 3 NADP(+) + 3 H2O = sulfite + 3 NADPH + 4 H(+). It participates in sulfur metabolism; hydrogen sulfide biosynthesis; hydrogen sulfide from sulfite (NADPH route): step 1/1. Its function is as follows. Component of the sulfite reductase complex that catalyzes the 6-electron reduction of sulfite to sulfide. This is one of several activities required for the biosynthesis of L-cysteine from sulfate. The flavoprotein component catalyzes the electron flow from NADPH -&gt; FAD -&gt; FMN to the hemoprotein component. In Enterobacter sp. (strain 638), this protein is Sulfite reductase [NADPH] flavoprotein alpha-component.